The primary structure comprises 207 residues: Ribonuclease HII (207 aa).

In terms of domain architecture, RNase H type-2 spans arginine 17–aspartate 207. A divalent metal cation-binding residues include aspartate 23, glutamate 24, and aspartate 120.

The protein belongs to the RNase HII family. Mn(2+) serves as cofactor. Mg(2+) is required as a cofactor.

It localises to the cytoplasm. It carries out the reaction Endonucleolytic cleavage to 5'-phosphomonoester.. Functionally, endonuclease that specifically degrades the RNA of RNA-DNA hybrids. The chain is Ribonuclease HII from Herpetosiphon aurantiacus (strain ATCC 23779 / DSM 785 / 114-95).